A 223-amino-acid chain; its full sequence is Deoxyribose-phosphate aldolase (223 aa).

Aspartate 91 functions as the Proton donor/acceptor in the catalytic mechanism. Catalysis depends on lysine 153, which acts as the Schiff-base intermediate with acetaldehyde. Catalysis depends on lysine 182, which acts as the Proton donor/acceptor.

Belongs to the DeoC/FbaB aldolase family. DeoC type 1 subfamily.

The protein localises to the cytoplasm. The catalysed reaction is 2-deoxy-D-ribose 5-phosphate = D-glyceraldehyde 3-phosphate + acetaldehyde. It functions in the pathway carbohydrate degradation; 2-deoxy-D-ribose 1-phosphate degradation; D-glyceraldehyde 3-phosphate and acetaldehyde from 2-deoxy-alpha-D-ribose 1-phosphate: step 2/2. Catalyzes a reversible aldol reaction between acetaldehyde and D-glyceraldehyde 3-phosphate to generate 2-deoxy-D-ribose 5-phosphate. This chain is Deoxyribose-phosphate aldolase, found in Streptococcus pyogenes serotype M4 (strain MGAS10750).